Consider the following 225-residue polypeptide: UPF0758 protein NMB1038 (225 aa).

Positions 102–224 constitute an MPN domain; it reads VLSDPDTVAD…VCSFRQLGLM (123 aa). Residues His-173, His-175, and Asp-186 each contribute to the Zn(2+) site. The JAMM motif signature appears at 173–186; that stretch reads HNHPGGSPEPSQED.

The protein belongs to the UPF0758 family.

The protein is UPF0758 protein NMB1038 of Neisseria meningitidis serogroup B (strain ATCC BAA-335 / MC58).